A 355-amino-acid chain; its full sequence is Syntaxin-5 (355 aa).

The Cytoplasmic segment spans residues Met-1–Arg-333. The segment covering Pro-28–Asp-37 has biased composition (polar residues). Residues Pro-28–Leu-47 are disordered. An IxM motif; signal for cargo packaging into COPII-coated vesicles motif is present at residues Ile-245 to Met-247. Positions Asp-263 to Tyr-325 constitute a t-SNARE coiled-coil homology domain. Residues Phe-287–Ala-318 adopt a coiled-coil conformation. Residues Trp-334 to Leu-354 form a helical; Anchor for type IV membrane protein membrane-spanning segment. Position 355 (Ala-355) is a topological domain, vesicular.

It belongs to the syntaxin family. Part of a ternary complex containing STX5A, NSFL1C and VCP. Part of a unique SNARE complex composed of the Golgi SNAREs GOSR1, GOSR2 and YKT6. This complex also includes VTI1A. Component of a SNARE complex consisting of STX5, YKT6, GOSR1 and BET1L. Interacts with BET1L. Interacts with BET1. Interacts with COG4. Interacts with GM130/GOLGA2. Interacts (via IxM motif) with SEC24C and SEC24D; mediates STX5 packaging into COPII-coated vesicles. Interacts with VLDLR; this interaction mediates VLDLR translocation from the endoplasmic reticulum to the plasma membrane.

Its subcellular location is the endoplasmic reticulum-Golgi intermediate compartment membrane. It localises to the golgi apparatus membrane. In terms of biological role, mediates endoplasmic reticulum to Golgi transport. Together with p115/USO1 and GM130/GOLGA2, involved in vesicle tethering and fusion at the cis-Golgi membrane to maintain the stacked and inter-connected structure of the Golgi apparatus. This chain is Syntaxin-5 (STX5), found in Bos taurus (Bovine).